Here is a 450-residue protein sequence, read N- to C-terminus: Runt-related transcription factor 1 (450 aa).

The disordered stretch occupies residues 1 to 25; the sequence is MRIPVDASTSRRFTPPSTALSPGKM. A compositionally biased stretch (polar residues) spans 7–20; that stretch reads ASTSRRFTPPSTAL. Threonine 14 is modified (phosphothreonine). Serine 21 is modified (phosphoserine). An N6-acetyllysine mark is found at lysine 24 and lysine 43. In terms of domain architecture, Runt spans 50-178; sequence SMVEVLADHP…TVDGPREPRR (129 aa). The interval 80–84 is interaction with DNA; it reads RCNKT. The chloride site is built by asparagine 112, glutamate 116, arginine 139, and valine 170. 2 interaction with DNA regions span residues 135–143 and 168–177; these read RFVGRSGRG and ITVDGPREPR. 2 disordered regions span residues 170-195 and 209-252; these read VDGPREPRRHRQKLDDQTKPGSLSFS and MRVS…SPPW. Phosphoserine occurs at positions 193 and 212. Over residues 222-247 the composition is skewed to polar residues; the sequence is PRASLNHSTAFNPQPQSQMQDARQIQ. A Phosphoserine; by HIPK2 modification is found at serine 249. Phosphoserine is present on residues serine 266 and serine 267. Position 272 is a phosphothreonine; by HIPK2 (threonine 272). At serine 275 the chain carries Phosphoserine; by HIPK2. The segment at 290-369 is interaction with KAT6A; that stretch reads SSRLSTAPDL…SQAQAGPFQT (80 aa). The residue at position 295 (threonine 295) is a Phosphothreonine. Residues 306–398 are interaction with KAT6B; sequence RQFPTLPSIS…MVGGERSPPR (93 aa). The tract at residues 360 to 400 is interaction with FOXP3; it reads SQAQAGPFQTGSPSYHLYYGTSAGSYQFSMVGGERSPPRIL. A disordered region spans residues 410-450; sequence AALLNPSLPSQSDVVETEGSHSNSPTNMPPARLEEAVWRPY. Over residues 416–435 the composition is skewed to polar residues; it reads SLPSQSDVVETEGSHSNSPT. Position 433 is a phosphoserine (serine 433). A compositionally biased stretch (basic and acidic residues) spans 441–450; that stretch reads RLEEAVWRPY.

In terms of assembly, heterodimer with CBFB. RUNX1 binds DNA as a monomer and through the Runt domain. DNA-binding is increased by heterodimerization. Interacts with TLE1 and ALYREF/THOC4. Interacts with ELF1, ELF2 and SPI1. Interacts via its Runt domain with the ELF4 N-terminal region. Interaction with ELF2 isoform 2 (NERF-1a) may act to repress RUNX1-mediated transactivation. Interacts with KAT6A and KAT6B. Interacts with SUV39H1, leading to abrogation of transactivating and DNA-binding properties of RUNX1. Interacts with YAP1 and HIPK2. Interaction with CDK6 prevents myeloid differentiation, reducing its transcription transactivation activity. Found in a complex with PRMT5, RUNX1 and CBFB. Interacts with FOXP3. Interacts with TBX21. Interacts with DPF2. Phosphorylated in its C-terminus upon IL-6 treatment. Phosphorylation enhances interaction with KAT6A. In terms of processing, methylated. Post-translationally, phosphorylated in Ser-249 Thr-272 and Ser-275 by HIPK2 when associated with CBFB and DNA. This phosphorylation promotes subsequent EP300 phosphorylation. In terms of tissue distribution, expressed in skeletal muscle.

The protein resides in the nucleus. Its function is as follows. CBF binds to the core site, 5'-PYGPYGGT-3', of a number of enhancers and promoters, including murine leukemia virus, polyomavirus enhancer, T-cell receptor enhancers, LCK, IL-3 and GM-CSF promoters. The alpha subunit binds DNA and appears to have a role in the development of normal hematopoiesis. Isoform AML-1L interferes with the transactivation activity of RUNX1. Acts synergistically with ELF4 to transactivate the IL-3 promoter and with ELF2 to transactivate the BLK promoter. Inhibits KAT6B-dependent transcriptional activation. Controls the anergy and suppressive function of regulatory T-cells (Treg) by associating with FOXP3. Activates the expression of IL2 and IFNG and down-regulates the expression of TNFRSF18, IL2RA and CTLA4, in conventional T-cells. Positively regulates the expression of RORC in T-helper 17 cells. This chain is Runt-related transcription factor 1 (Runx1), found in Rattus norvegicus (Rat).